A 273-amino-acid polypeptide reads, in one-letter code: Cysteine protease S273R (273 aa).

Catalysis depends on residues His-168 and Asn-187. Substrate is bound at residue Gln-226. Cys-232 (nucleophile) is an active-site residue.

Belongs to the peptidase C63 family.

The protein resides in the host cytoplasm. It is found in the virion. Cysteine protease that plays several role during infection including processing of the structural polyprotein or inhibition of the host immune response. Catalyzes the maturation of the pp220 and pp62 polyprotein precursors into core-shell proteins. Plays a role in the disruption of host pyroptosis via specific cleavage of gasdermin D/GSDMD. In addition, strongly decreases the host cGAS-STING signaling by targeting IKBKE via its enzymatic activity. Also impairs host FOXJ1-mediated antiviral effect via degradation of FOXJ1. In African swine fever virus (isolate Tick/Malawi/Lil 20-1/1983) (ASFV), this protein is Cysteine protease S273R.